A 542-amino-acid chain; its full sequence is 4-coumarate--CoA ligase 2 (542 aa).

Positions 189, 190, 191, 192, 193, and 197 each coordinate ATP. Residues Tyr239 and Ser243 each coordinate (E)-4-coumaroyl-AMP. (E)-caffeoyl-AMP is bound by residues Tyr239 and Ser243. Residues Tyr239 and Ser243 each coordinate (E)-feruloyl-AMP. CoA is bound at residue Lys260. Residues 262-331 (DIVSFLELIQ…AKFPNAKLGQ (70 aa)) form an SBD1 region. Ala309 provides a ligand contact to (E)-4-coumaroyl-AMP. Residue Ala309 participates in (E)-caffeoyl-AMP binding. Ala309 is a (E)-feruloyl-AMP binding site. Positions 331, 332, and 336 each coordinate ATP. (E)-4-coumaroyl-AMP-binding residues include Gly332, Thr336, Met344, Asp420, Arg435, Lys437, and Lys441. Residues Gly332, Thr336, Met344, Asp420, Arg435, Lys437, and Lys441 each contribute to the (E)-caffeoyl-AMP site. Gly332, Thr336, Met344, Asp420, Arg435, Lys437, and Lys441 together coordinate (E)-feruloyl-AMP. Positions 332 and 336 each coordinate AMP. Positions 332–399 (GYGMTEAGPV…IRGDQIMKGY (68 aa)) are SBD2. ATP is bound by residues Asp420 and Arg435. An AMP-binding site is contributed by Asp420. Residues Lys437 and Lys441 each coordinate AMP. CoA contacts are provided by Lys443 and Gly444. Gln446 contacts AMP. Residue Lys526 participates in ATP binding.

The protein belongs to the ATP-dependent AMP-binding enzyme family. Mg(2+) serves as cofactor. Mainly expressed in old stems and, to a lower extent, in flowers (e.g. in ovary), leaves, young stems, shoot tips and patel limbs.

The catalysed reaction is (E)-4-coumarate + ATP + CoA = (E)-4-coumaroyl-CoA + AMP + diphosphate. The enzyme catalyses (E)-caffeate + ATP + CoA = (E)-caffeoyl-CoA + AMP + diphosphate. It catalyses the reaction (E)-ferulate + ATP + CoA = (E)-feruloyl-CoA + AMP + diphosphate. It carries out the reaction (E)-cinnamate + ATP + CoA = (E)-cinnamoyl-CoA + AMP + diphosphate. The catalysed reaction is (E)-4-coumarate + ATP + H(+) = (E)-4-coumaroyl-AMP + diphosphate. The enzyme catalyses (E)-4-coumaroyl-AMP + CoA = (E)-4-coumaroyl-CoA + AMP + H(+). It catalyses the reaction (E)-caffeate + ATP + H(+) = (E)-caffeoyl-AMP + diphosphate. It carries out the reaction (E)-caffeoyl-AMP + CoA = (E)-caffeoyl-CoA + AMP + H(+). The catalysed reaction is (E)-ferulate + ATP + H(+) = (E)-feruloyl-AMP + diphosphate. The enzyme catalyses (E)-feruloyl-AMP + CoA = (E)-feruloyl-CoA + AMP + H(+). It participates in phytoalexin biosynthesis; 3,4',5-trihydroxystilbene biosynthesis; 3,4',5-trihydroxystilbene from trans-4-coumarate: step 1/2. Its function is as follows. Major enzyme of the phenylpropanoid pathway that mediates the production of several precursors for numerous metabolites and regulates carbon flow. Catalyzes the formation of CoA thioesters using 4-coumarate, ferulate, caffeate, and cinnamate as substrates. Follows a two-step reaction mechanism, wherein a (hydroxy)cinnamate substrate first undergoes adenylation by ATP leading to an acyl-AMP, followed by a thioesterification in the presence of CoA to yield the final (hydroxy)cinnamoyl-CoA product. Almost inactive toward sinapate. This Nicotiana tabacum (Common tobacco) protein is 4-coumarate--CoA ligase 2.